The sequence spans 332 residues: Succinylglutamate desuccinylase (332 aa).

The Zn(2+) site is built by His59, Glu62, and His151. The active site involves Glu215.

The protein belongs to the AspA/AstE family. Succinylglutamate desuccinylase subfamily. It depends on Zn(2+) as a cofactor.

The enzyme catalyses N-succinyl-L-glutamate + H2O = L-glutamate + succinate. The protein operates within amino-acid degradation; L-arginine degradation via AST pathway; L-glutamate and succinate from L-arginine: step 5/5. In terms of biological role, transforms N(2)-succinylglutamate into succinate and glutamate. In Pseudomonas paraeruginosa (strain DSM 24068 / PA7) (Pseudomonas aeruginosa (strain PA7)), this protein is Succinylglutamate desuccinylase.